Here is a 948-residue protein sequence, read N- to C-terminus: Alanine--tRNA ligase (948 aa).

Positions 638, 642, 739, and 743 each coordinate Zn(2+).

This sequence belongs to the class-II aminoacyl-tRNA synthetase family. Requires Zn(2+) as cofactor.

It localises to the cytoplasm. It carries out the reaction tRNA(Ala) + L-alanine + ATP = L-alanyl-tRNA(Ala) + AMP + diphosphate. In terms of biological role, catalyzes the attachment of alanine to tRNA(Ala) in a two-step reaction: alanine is first activated by ATP to form Ala-AMP and then transferred to the acceptor end of tRNA(Ala). Also edits incorrectly charged Ser-tRNA(Ala) and Gly-tRNA(Ala) via its editing domain. This is Alanine--tRNA ligase from Paracidovorax citrulli (strain AAC00-1) (Acidovorax citrulli).